The primary structure comprises 323 residues: Phosphate acyltransferase (323 aa).

It belongs to the PlsX family. Homodimer. Probably interacts with PlsY.

Its subcellular location is the cytoplasm. It carries out the reaction a fatty acyl-[ACP] + phosphate = an acyl phosphate + holo-[ACP]. The protein operates within lipid metabolism; phospholipid metabolism. Catalyzes the reversible formation of acyl-phosphate (acyl-PO(4)) from acyl-[acyl-carrier-protein] (acyl-ACP). This enzyme utilizes acyl-ACP as fatty acyl donor, but not acyl-CoA. The sequence is that of Phosphate acyltransferase from Finegoldia magna (strain ATCC 29328 / DSM 20472 / WAL 2508) (Peptostreptococcus magnus).